A 305-amino-acid chain; its full sequence is MTLVRERRHQEPLTLSIPPLIYHGTAFSVASSSSSSPETSPIQTLNDLEKLSVLGQGSGGTVYKTRHRRTKTLYALKVLRPNLNTTVTVEADILKRIESSFIIKCYAVFVSLYDLCFVMELMEKGSLHDALLAQQVFSEPMVSSLANRILQGLRYLQKMGIVHGDIKPSNLLINKKGEVKIADFGASRIVAGGDYGSNGTCAYMSPERVDLEKWGFGGEVGFAGDVWSLGVVVLECYIGRYPLTKVGDKPDWATLFCAICCNEKVDIPVSCSLEFRDFVGRCLEKDWRKRDTVEELLRHSFVKNR.

Serine 34 carries the phosphoserine modification. The Protein kinase domain maps to 48–302; sequence LEKLSVLGQG…VEELLRHSFV (255 aa). ATP is bound by residues 54 to 62 and lysine 77; that span reads LGQGSGGTV. Aspartate 165 (proton acceptor) is an active-site residue. Threonine 200 carries the post-translational modification Phosphothreonine.

The protein belongs to the protein kinase superfamily. STE Ser/Thr protein kinase family. MAP kinase kinase subfamily. Interacts with P.syringae type III effector HopF2.

The enzyme catalyses L-seryl-[protein] + ATP = O-phospho-L-seryl-[protein] + ADP + H(+). It catalyses the reaction L-threonyl-[protein] + ATP = O-phospho-L-threonyl-[protein] + ADP + H(+). The catalysed reaction is L-tyrosyl-[protein] + ATP = O-phospho-L-tyrosyl-[protein] + ADP + H(+). In Arabidopsis thaliana (Mouse-ear cress), this protein is Mitogen-activated protein kinase kinase 10 (MKK10).